We begin with the raw amino-acid sequence, 301 residues long: MEFYFLGTGAGMPSKQRNVSAIALLHPKMTWLFDCGEATQHQMLHSPIKPRKVSTIFITHLHGDHIFGLPGFISTRAALEGTTLLTIFGPKGIKEWLEATLRITGTYLRYPLDVIEVEAGQTYEQEGFHIHVEALEHRFLAYGYRIEGQEEKGALHVEALKQLGVPSGPLYRQIKQKETFVFEGTEYQSTDFLGEPKPGIKLAVLGDTVPCEGSLRLAEKVDVLVHEATFADSEQDHAGRFGHSTARQAAEIALKAGVKKLLLTHISARYVDQEQRLEAEAREVFEESYLMTDHQSVVIKG.

Positions 60, 62, 64, 65, 137, 207, and 265 each coordinate Zn(2+). Residue D64 is the Proton acceptor of the active site.

It belongs to the RNase Z family. As to quaternary structure, homodimer. Requires Zn(2+) as cofactor.

The enzyme catalyses Endonucleolytic cleavage of RNA, removing extra 3' nucleotides from tRNA precursor, generating 3' termini of tRNAs. A 3'-hydroxy group is left at the tRNA terminus and a 5'-phosphoryl group is left at the trailer molecule.. Functionally, zinc phosphodiesterase, which displays some tRNA 3'-processing endonuclease activity. Probably involved in tRNA maturation, by removing a 3'-trailer from precursor tRNA. This chain is Ribonuclease Z, found in Exiguobacterium sibiricum (strain DSM 17290 / CCUG 55495 / CIP 109462 / JCM 13490 / 255-15).